The sequence spans 167 residues: Ribosome maturation factor RimM (167 aa).

In terms of domain architecture, PRC barrel spans 92–166 (DDEFYHTDLI…RIVADPPEGL (75 aa)).

Belongs to the RimM family. As to quaternary structure, binds ribosomal protein uS19.

The protein resides in the cytoplasm. In terms of biological role, an accessory protein needed during the final step in the assembly of 30S ribosomal subunit, possibly for assembly of the head region. Essential for efficient processing of 16S rRNA. May be needed both before and after RbfA during the maturation of 16S rRNA. It has affinity for free ribosomal 30S subunits but not for 70S ribosomes. The sequence is that of Ribosome maturation factor RimM from Ruegeria pomeroyi (strain ATCC 700808 / DSM 15171 / DSS-3) (Silicibacter pomeroyi).